Reading from the N-terminus, the 241-residue chain is Sugar fermentation stimulation protein homolog (241 aa).

The protein belongs to the SfsA family.

This chain is Sugar fermentation stimulation protein homolog, found in Nostoc sp. (strain PCC 7120 / SAG 25.82 / UTEX 2576).